The following is a 483-amino-acid chain: Teichuronic acid biosynthesis protein TuaB (483 aa).

11 helical membrane passes run 15 to 34, 41 to 63, 83 to 105, 112 to 134, 154 to 176, 294 to 316, 321 to 343, 356 to 378, 382 to 404, 411 to 433, and 448 to 470; these read TSIS…ALLG, EFGL…DMGF, WLNI…VIAG, LVFL…QYQY, VLSF…YVIS, LALV…ITAV, WLAA…LMNP, LAFY…AVQT, LTVA…WLLA, LSAY…IIAF, and MRLA…KAYP.

The protein belongs to the polysaccharide synthase family.

The protein localises to the cell membrane. The protein operates within cell wall biogenesis; teichuronic acid biosynthesis. Functionally, might be involved in the translocation of teichuronic acid repeating units from the inner to the outer surface of the membrane. The sequence is that of Teichuronic acid biosynthesis protein TuaB (tuaB) from Bacillus subtilis (strain 168).